The following is a 324-amino-acid chain: Aprataxin (324 aa).

The FHA-like domain maps to 23–72 (SVTLGRGPDTKIKDKKCSREQVELRADCNRGFVTVKQLGVNPTLVDDVVV). The segment at 100-160 (TEDTSRSKPS…QGLKASMQDP (61 aa)) is disordered. A compositionally biased stretch (polar residues) spans 111 to 125 (RAQQIQSPTKTTADV). The 106-residue stretch at 150 to 255 (SQGLKASMQD…ISQDFDSPCL (106 aa)) folds into the HIT domain. Interaction with DNA substrate regions lie at residues 175 to 179 (DKYPK) and 237 to 238 (SM). The Histidine triad motif motif lies at 240 to 244 (HVHLH). His242 acts as the Tele-AMP-histidine intermediate in catalysis. Residues 299–321 (LRCHVCGKEQTTIPKLKDHLKTH) form a C2H2-type zinc finger.

The protein localises to the nucleus. The protein resides in the nucleoplasm. It is found in the nucleolus. The enzyme catalyses a 5'-end adenosine-5'-diphospho-5'-2'-deoxyribonucleoside-DNA + H2O = a 5'-end 5'-phospho-2'-deoxyribonucleoside-DNA + AMP + 2 H(+). The catalysed reaction is a 5'-end adenosine-5'-diphospho-5'-ribonucleoside-2'-deoxyribonucleotide-DNA + H2O = a 5'-end 5'-phospho-ribonucleoside-2'-deoxyribonucleotide-DNA + AMP + 2 H(+). It catalyses the reaction a 3'-end 2'-deoxyribonucleotide-3'-diphospho-5'-guanosine-DNA + H2O = a 3'-end 2'-deoxyribonucleotide 3'-phosphate-DNA + GMP + 2 H(+). Its function is as follows. DNA-binding protein involved in single-strand DNA break repair, double-strand DNA break repair and base excision repair. Resolves abortive DNA ligation intermediates formed either at base excision sites, or when DNA ligases attempt to repair non-ligatable breaks induced by reactive oxygen species. Catalyzes the release of adenylate groups covalently linked to 5'-phosphate termini, resulting in the production of 5'-phosphate termini that can be efficiently rejoined. Also able to hydrolyze adenosine 5'-monophosphoramidate (AMP-NH(2)) and diadenosine tetraphosphate (AppppA), but with lower catalytic activity. Likewise, catalyzes the release of 3'-linked guanosine (DNAppG) and inosine (DNAppI) from DNA, but has higher specific activity with 5'-linked adenosine (AppDNA). The chain is Aprataxin (aptx) from Danio rerio (Zebrafish).